We begin with the raw amino-acid sequence, 194 residues long: UPF0301 protein FTM_0963 (194 aa).

Belongs to the UPF0301 (AlgH) family.

This Francisella tularensis subsp. mediasiatica (strain FSC147) protein is UPF0301 protein FTM_0963.